The following is a 2170-amino-acid chain: Supervillin (2170 aa).

The interval 1 to 167 is interaction with MYLK; that stretch reads MKRKERIARR…NSRHSRTESG (167 aa). Disordered regions lie at residues 37–94, 107–327, 413–444, 511–546, and 567–643; these read EDTP…HSLE, RRRQ…QSES, PEPLERSPKSLLTSEDDRLVRGHKDPSGNKDL, DYTGPPQLQVPRHKDEAPSQELELQSSRAEGPGAEA, and RASK…EDEE. S50 is subject to Phosphoserine. Polar residues-rich tracts occupy residues 63–73 and 81–90; these read PGSSLEKQTPS and GIHSSGSMDT. Residues 134–166 are compositionally biased toward basic and acidic residues; that stretch reads SRKDPDVTERRGKSDKQEEQSKDANSRHSRTES. The segment covering 167–195 has biased composition (polar residues); sequence GPRTSLVASQDCTPLGSNMSDQEQLLNVE. 3 positions are modified to phosphoserine: S220, S227, and S241. Polar residues predominate over residues 230–241; it reads QIPSSPLQQPAS. Basic and acidic residues-rich tracts occupy residues 261–272 and 286–297; these read PTHEWFLQRDSE and KVREKLVKEESA. Residues 298–313 are compositionally biased toward polar residues; sequence RSSPELTSESLTQRRQ. 2 positions are modified to phosphoserine: S299 and S300. Over residues 427–444 the composition is skewed to basic and acidic residues; the sequence is EDDRLVRGHKDPSGNKDL. 2 stretches are compositionally biased toward basic and acidic residues: residues 570–582 and 606–615; these read KKPELQSRVERSA and ESRKTSERFR. S632, S666, S728, and S761 each carry phosphoserine. Residues 743-771 form a disordered region; it reads ASAHQKALARDQANEGRESAEPGEPDSST. Residues 750 to 762 are compositionally biased toward basic and acidic residues; it reads LARDQANEGRESA. Y809 carries the post-translational modification Phosphotyrosine. Phosphothreonine is present on T811. A phosphoserine mark is found at S857, S877, and S881. The interval 887–909 is disordered; that stretch reads AWRPLVEHSGSKGMPGESGKTES. Phosphoserine is present on residues S960, S1011, S1031, and S1077. The tract at residues 1117–1137 is disordered; sequence HTQEVEQSLKKKRVTESRESQ. Residues 1119 to 1137 are compositionally biased toward basic and acidic residues; that stretch reads QEVEQSLKKKRVTESRESQ. The residue at position 1159 (R1159) is an Omega-N-methylarginine. 2 positions are modified to phosphoserine: S1181 and S1184. Residue T1186 is modified to Phosphothreonine. 3 positions are modified to phosphoserine: S1190, S1278, and S1361. Residues 1375–1643 are interaction with NEB; that stretch reads SNINLRSVNL…KFLDWTELKR (269 aa). Gelsolin-like repeat units lie at residues 1397–1496, 1516–1638, 1708–1818, 1837–1938, and 1971–2078; these read KKLM…LGGQ, IETN…FLDW, VSVD…FQGG, WRLY…LGRR, and ATEF…FPSW. Positions 2107–2170 constitute an HP domain; sequence KLCKTIYPLA…VNLKKSKGLF (64 aa).

The protein belongs to the villin/gelsolin family. In terms of assembly, associates with F-actin. Interacts with NEB. Interacts with MYH9. Interacts with MYLK. Interacts with TASOR. As to quaternary structure, interacts with TRIP6. Interacts with DYNLT1. Interacts with KIF14; at midbody during cytokinesis. Expressed in the heart, tongue and granular cells within the cerebellum.

Its subcellular location is the cell membrane. It is found in the cytoplasm. It localises to the cytoskeleton. The protein resides in the cell projection. The protein localises to the invadopodium. Its subcellular location is the podosome. It is found in the midbody. It localises to the cleavage furrow. Forms a high-affinity link between the actin cytoskeleton and the membrane. Is among the first costameric proteins to assemble during myogenesis and it contributes to myogenic membrane structure and differentiation. Appears to be involved in myosin II assembly. May modulate myosin II regulation through MLCK during cell spreading, an initial step in cell migration. May play a role in invadopodial function. Functionally, may be involved in modulation of focal adhesions. Supervillin-mediated down-regulation of focal adhesions involves binding to TRIP6. Plays a role in cytokinesis through KIF14 interaction. This is Supervillin (Svil) from Mus musculus (Mouse).